The chain runs to 389 residues: MIDKKNITIGIVAGEVSGDILGAGLIRALKIQYPQARFIGIAGKNMLAEGCKTLVDMEDIAVMGLVEVIKYLPRLLKIRRLVIDTMLAEKPDIFIGIDAPDFNLDIELKLKKQGIKTLHYVSPSVWAWRQKRIFKIAQATNLVLAFLPFEKAFYDRFNVPCRFVGHTMADIIDLQPDRQDACFQLNLEPKHRYVAILVGSREAEVQFLTPPFLQTAQLIKQRFPDVQFLVPLVNEKRRKQFEQIKAQIAPHLEVIFLDGQARQAMIVAEASLLASGTASLECMLCKSPMVVGYKMKPFTYFLAKRLVKTKYISLPNLLADDMLVPEMIQEDCTAEKLAEKLSVYLEQTESGIKNRQHLIQQFTQLHQLIRCDADKQAAQAVIDLLNDEV.

It belongs to the LpxB family.

The catalysed reaction is a lipid X + a UDP-2-N,3-O-bis[(3R)-3-hydroxyacyl]-alpha-D-glucosamine = a lipid A disaccharide + UDP + H(+). It participates in bacterial outer membrane biogenesis; LPS lipid A biosynthesis. Its function is as follows. Condensation of UDP-2,3-diacylglucosamine and 2,3-diacylglucosamine-1-phosphate to form lipid A disaccharide, a precursor of lipid A, a phosphorylated glycolipid that anchors the lipopolysaccharide to the outer membrane of the cell. This Histophilus somni (strain 2336) (Haemophilus somnus) protein is Lipid-A-disaccharide synthase.